The chain runs to 329 residues: Secretory carrier-associated membrane protein 2 (329 aa).

Disordered stretches follow at residues 1–21 (MSAF…FQDP) and 51–72 (VTQL…PTQP). Residues 1-153 (MSAFDTNPFA…DYQRICKMLY (153 aa)) are Cytoplasmic-facing. The helical transmembrane segment at 154–174 (YLWMLHSVTLFLNLLACLAWF) threads the bilayer. The Lumenal portion of the chain corresponds to 175–181 (SGNSSKG). Residues 182–202 (VDFGLSILWFLIFTPCAFLCW) traverse the membrane as a helical segment. Residues 203-218 (YRPIYKAFRSDNSFSF) are Cytoplasmic-facing. Positions 203–218 (YRPIYKAFRSDNSFSF) are interaction with SLC9A7. The helical transmembrane segment at 219–239 (FVFFFVFFCQIGIYIIQLVGI) threads the bilayer. At 240–262 (PGLGDSGWIAALSTLDNHSLAIS) the chain is on the lumenal side. The chain crosses the membrane as a helical span at residues 263-283 (VIMMVVAGFFTLCAVLSVFLL). Residues 284 to 329 (QRVHSLYRRTGASFQQAQEEFSQGIFSSRTFHRAASSAAQGAFQGN) are Cytoplasmic-facing. Residues S319 and S320 each carry the phosphoserine modification.

It belongs to the SCAMP family. Interacts with SLC6A4 and SLC9A7. Interacts with SLC9A5; this interaction regulates SLC9A5 cell-surface targeting and SLC9A5 activity. In terms of tissue distribution, widely expressed.

Its subcellular location is the golgi apparatus. The protein resides in the trans-Golgi network membrane. It localises to the recycling endosome membrane. Functionally, functions in post-Golgi recycling pathways. Acts as a recycling carrier to the cell surface. The sequence is that of Secretory carrier-associated membrane protein 2 (SCAMP2) from Homo sapiens (Human).